The following is a 217-amino-acid chain: Probable transaldolase (217 aa).

Lys-83 (schiff-base intermediate with substrate) is an active-site residue.

This sequence belongs to the transaldolase family. Type 3B subfamily.

The protein localises to the cytoplasm. The enzyme catalyses D-sedoheptulose 7-phosphate + D-glyceraldehyde 3-phosphate = D-erythrose 4-phosphate + beta-D-fructose 6-phosphate. Its pathway is carbohydrate degradation; pentose phosphate pathway; D-glyceraldehyde 3-phosphate and beta-D-fructose 6-phosphate from D-ribose 5-phosphate and D-xylulose 5-phosphate (non-oxidative stage): step 2/3. Its function is as follows. Transaldolase is important for the balance of metabolites in the pentose-phosphate pathway. The protein is Probable transaldolase of Caulobacter vibrioides (strain NA1000 / CB15N) (Caulobacter crescentus).